Reading from the N-terminus, the 581-residue chain is Jasmonoyl--L-amino acid synthetase GH3.5 (581 aa).

Ser92 contacts ATP. Ser95 lines the jasmonate pocket. ATP is bound by residues Thr115, Asn161, and 324 to 329 (GASEGW). 159-163 (TTNLY) contributes to the an L-alpha-amino acid binding site. Residues 321–324 (ADYG) and Ser326 contribute to the jasmonate site. 534-538 (EILDH) is an an L-alpha-amino acid binding site. Position 561 (Lys561) interacts with ATP.

It belongs to the IAA-amido conjugating enzyme family. In terms of tissue distribution, expressed in green shoots, roots and flowers.

It carries out the reaction a jasmonate + an L-alpha-amino acid + ATP = a jasmonyl-L-amino acid + AMP + diphosphate + H(+). Catalyzes the synthesis of jasmonate-amino acid conjugates by adenylation. Catalyzes the conjugation of jasmonate (JA) to Ile when expressed in a heterologous system (E.coli). Catalyzes in vitro the conjugation of jasmonate (JA) to Ile, Phe, Cys, Leu, Met, Ala, Val and Trp. Involved in the production of JA-Ile in response to infection by the rice blast fungus Magnaporthe oryzae. Required for the accumulation of the flavonoid phytoalexin sakuranetin in response to infection by the rice blast fungus. Involved in herbivory-induced JA-Ile accumulation. Involved in the production of JA-Ile in response to wounding. Required for modulation of light and JA signaling in photomorphogenesis. Required for normal seed development. Required for optimal flower opening and closing and anther dehiscence. May catalyze the synthesis of indole-3-acetic acid (IAA)-amino acid conjugates, providing a mechanism for the plant to cope with the presence of excess auxin. The protein is Jasmonoyl--L-amino acid synthetase GH3.5 of Oryza sativa subsp. japonica (Rice).